The chain runs to 311 residues: MEKELIFGHRNPDTDAIGTAIAYSYFQNQHGYNTEAVALGEANDETSFALKKFGFEAPRVVKTVANEVKAIMLVDHNEPQQSVEDRDQVKVTHVIDHHRISNFATIDPLFYRAEPVGCTSTVLWEMFKEQNMEIPANIAGIMLSAIISDTLLLKSPTTTDIDKEAVEELAKIAGVDYKEYGLELLKAGTNIAAKSVEELIDLDAKSFELGSKTARIAQVNVVDVPEALERKDAFLAAMEKDAKANGYDLFMLVITNVLDSDSEVLFIGDDESKSVFAKAFGKELVDSEAHLLGVVSRKKQIVPPLTRAFEA.

Histidine 9, aspartate 13, aspartate 15, aspartate 75, histidine 97, and aspartate 149 together coordinate Mn(2+).

It belongs to the PPase class C family. The cofactor is Mn(2+).

The protein localises to the cytoplasm. It catalyses the reaction diphosphate + H2O = 2 phosphate + H(+). The protein is Probable manganese-dependent inorganic pyrophosphatase of Lactobacillus delbrueckii subsp. bulgaricus (strain ATCC BAA-365 / Lb-18).